Reading from the N-terminus, the 97-residue chain is Aspartyl/glutamyl-tRNA(Asn/Gln) amidotransferase subunit C (97 aa).

It belongs to the GatC family. As to quaternary structure, heterotrimer of A, B and C subunits.

It carries out the reaction L-glutamyl-tRNA(Gln) + L-glutamine + ATP + H2O = L-glutaminyl-tRNA(Gln) + L-glutamate + ADP + phosphate + H(+). It catalyses the reaction L-aspartyl-tRNA(Asn) + L-glutamine + ATP + H2O = L-asparaginyl-tRNA(Asn) + L-glutamate + ADP + phosphate + 2 H(+). Its function is as follows. Allows the formation of correctly charged Asn-tRNA(Asn) or Gln-tRNA(Gln) through the transamidation of misacylated Asp-tRNA(Asn) or Glu-tRNA(Gln) in organisms which lack either or both of asparaginyl-tRNA or glutaminyl-tRNA synthetases. The reaction takes place in the presence of glutamine and ATP through an activated phospho-Asp-tRNA(Asn) or phospho-Glu-tRNA(Gln). This Nostoc punctiforme (strain ATCC 29133 / PCC 73102) protein is Aspartyl/glutamyl-tRNA(Asn/Gln) amidotransferase subunit C.